Here is a 64-residue protein sequence, read N- to C-terminus: MPKFKTHTGAGKRFRVTGTGKLMRRRANRNHLLEHKPSRRTRRLWNEVPVAAADTARMRRLLGR.

The protein belongs to the bacterial ribosomal protein bL35 family.

In Acidothermus cellulolyticus (strain ATCC 43068 / DSM 8971 / 11B), this protein is Large ribosomal subunit protein bL35.